The primary structure comprises 269 residues: Formamidopyrimidine-DNA glycosylase (269 aa).

Pro-2 acts as the Schiff-base intermediate with DNA in catalysis. Residue Glu-3 is the Proton donor of the active site. Lys-57 functions as the Proton donor; for beta-elimination activity in the catalytic mechanism. 3 residues coordinate DNA: His-90, Arg-109, and Lys-150. The FPG-type zinc finger occupies 235 to 269 (RVYGRNGEPCRTCGTPIETAKHGQRSTFFCRRCQK). The Proton donor; for delta-elimination activity role is filled by Arg-259.

The protein belongs to the FPG family. As to quaternary structure, monomer. Requires Zn(2+) as cofactor.

The catalysed reaction is Hydrolysis of DNA containing ring-opened 7-methylguanine residues, releasing 2,6-diamino-4-hydroxy-5-(N-methyl)formamidopyrimidine.. The enzyme catalyses 2'-deoxyribonucleotide-(2'-deoxyribose 5'-phosphate)-2'-deoxyribonucleotide-DNA = a 3'-end 2'-deoxyribonucleotide-(2,3-dehydro-2,3-deoxyribose 5'-phosphate)-DNA + a 5'-end 5'-phospho-2'-deoxyribonucleoside-DNA + H(+). Its function is as follows. Involved in base excision repair of DNA damaged by oxidation or by mutagenic agents. Acts as a DNA glycosylase that recognizes and removes damaged bases. Has a preference for oxidized purines, such as 7,8-dihydro-8-oxoguanine (8-oxoG). Has AP (apurinic/apyrimidinic) lyase activity and introduces nicks in the DNA strand. Cleaves the DNA backbone by beta-delta elimination to generate a single-strand break at the site of the removed base with both 3'- and 5'-phosphates. The protein is Formamidopyrimidine-DNA glycosylase of Pectobacterium carotovorum subsp. carotovorum (strain PC1).